The sequence spans 107 residues: Antimicrobial peptide damicornin (107 aa).

Positions M1–A22 are cleaved as a signal peptide. The propeptide occupies A23 to R67. The segment covering D37–A46 has biased composition (acidic residues). The interval D37–V62 is disordered. Residues N47–A61 are compositionally biased toward low complexity. Cystine bridges form between C69-C105, C78-C99, and C85-C103. R106 is subject to Arginine amide.

This sequence belongs to the coral AMP family. In terms of tissue distribution, is specifically expressed in the granular cells of the ectoderm.

It localises to the cytoplasm. Its subcellular location is the stress granule. It is found in the secreted. Its function is as follows. Cationic peptide with probable antimicrobial activity against coral pathogens. Shows in vitro activity against Gram-positive bacteria and the filamentous fungus F.oxysporum (MIC=1.25 uM). Gram-positive bacteria tested are B.megaterium (MIC=20 uM), S.aureus (MIC=5 uM), M. luteus (MIC=1.25 uM), B.stationis (MIC=10 uM), M.maritypicum (MIC=20 uM). Has no or little effect against Gram-negative bacteria (the coral pathogen V.coralliilyticus (MIC&gt;20 uM), V.aesturianus (MIC&gt;20 uM), V.shiloi (MIC&gt;20 uM), and E.coli (MIC=10 uM)). Has no hemolytic activity against sheep erythrocytes. This is Antimicrobial peptide damicornin from Pocillopora damicornis (Cauliflower coral).